A 72-amino-acid polypeptide reads, in one-letter code: Cytotoxin 9 (72 aa).

The signal sequence occupies residues V1–T12. Intrachain disulfides connect C15/C33, C26/C50, C54/C65, and C66/C71.

Belongs to the three-finger toxin family. Short-chain subfamily. Type IA cytotoxin sub-subfamily. Monomer in solution; Homodimer and oligomer in the presence of negatively charged lipids forming a pore with a size ranging between 20 and 30 Angstroms. In terms of tissue distribution, expressed by the venom gland.

The protein resides in the secreted. Functionally, shows cytolytic activity on many different cells by forming a pore in lipid membranes. In vivo, increases heart rate or kills the animal by cardiac arrest. In addition, it binds to heparin with high affinity, interacts with Kv channel-interacting protein 1 (KCNIP1) in a calcium-independent manner, and binds to integrin alpha-V/beta-3 (ITGAV/ITGB3) with moderate affinity. Preferentially binds acidic phospholipids like phosphatidylserine, phosphatidic acid and phosphatidyl glycerol. Has hemolytic activity towards human erythrocytes (EC(50)=0.171 uM) and cytolytic activity towards various cell lines. This is Cytotoxin 9 from Naja naja (Indian cobra).